Reading from the N-terminus, the 314-residue chain is Olfactory receptor 1E1 (314 aa).

Residues 1 to 25 are Extracellular-facing; sequence MMGQNQTSISDFLLLGLPIQPEQQN. The N-linked (GlcNAc...) asparagine glycan is linked to N5. Residues 26–49 form a helical membrane-spanning segment; that stretch reads LCYALFLAMYLTTLLGNLLIIVLI. Residues 50–57 are Cytoplasmic-facing; it reads RLDSHLHT. A helical membrane pass occupies residues 58-79; the sequence is PMYLFLSNLSFSDLCFSSVTIP. Residues 80–100 are Extracellular-facing; that stretch reads KLLQNMQNQDPSIPYADCLTQ. C97 and C189 are disulfide-bonded. Residues 101–120 form a helical membrane-spanning segment; it reads MYFFLLFGDLESFLLVAMAY. Over 121-139 the chain is Cytoplasmic; the sequence is DRYVAICFALHYTAIMSPM. Residues 140-158 traverse the membrane as a helical segment; it reads LCLSLVALSWVLTTFHAML. At 159–195 the chain is on the extracellular side; the sequence is HTLLMARLCFCADNVIPHFFCDMSALLKLACSDTRVN. Residues 196-219 traverse the membrane as a helical segment; that stretch reads EWVIFIMGGLIVVIPFLLILGSYA. The Cytoplasmic segment spans residues 220–236; that stretch reads RIVSSILKVPSSKGICK. A helical transmembrane segment spans residues 237–259; that stretch reads AFSTCGSHLSVVSLFYGTVIGLY. Residues 260-272 are Extracellular-facing; the sequence is LCPSANSSTLKET. A helical transmembrane segment spans residues 273–292; the sequence is VMAMMYTVVTPMLNPFIYSL. Topologically, residues 293 to 314 are cytoplasmic; sequence RNGDMKGALSRVIHQKKTFFSL.

The protein belongs to the G-protein coupled receptor 1 family.

Its subcellular location is the cell membrane. Its function is as follows. Odorant receptor. The polypeptide is Olfactory receptor 1E1 (OR1E1) (Gorilla gorilla gorilla (Western lowland gorilla)).